The following is a 473-amino-acid chain: Ribulose bisphosphate carboxylase large chain 1 (473 aa).

N116 and T166 together coordinate substrate. K168 (proton acceptor) is an active-site residue. Position 170 (K170) interacts with substrate. K194, D196, and E197 together coordinate Mg(2+). K194 carries the post-translational modification N6-carboxylysine. The active-site Proton acceptor is the H287. Residues R288, H320, and S372 each contribute to the substrate site.

It belongs to the RuBisCO large chain family. Type I subfamily. Heterohexadecamer of 8 large chains and 8 small chains. Mg(2+) is required as a cofactor.

The enzyme catalyses 2 (2R)-3-phosphoglycerate + 2 H(+) = D-ribulose 1,5-bisphosphate + CO2 + H2O. It catalyses the reaction D-ribulose 1,5-bisphosphate + O2 = 2-phosphoglycolate + (2R)-3-phosphoglycerate + 2 H(+). In terms of biological role, ruBisCO catalyzes two reactions: the carboxylation of D-ribulose 1,5-bisphosphate, the primary event in carbon dioxide fixation, as well as the oxidative fragmentation of the pentose substrate. Both reactions occur simultaneously and in competition at the same active site. The polypeptide is Ribulose bisphosphate carboxylase large chain 1 (Acidithiobacillus ferrooxidans (Thiobacillus ferrooxidans)).